The sequence spans 68 residues: Disintegrin EMS11A (68 aa).

Residues 1–65 form the Disintegrin domain; it reads NSAHPCCDPV…DCPRNRYKGK (65 aa). Intrachain disulfides connect Cys6–Cys29, Cys20–Cys26, Cys25–Cys50, and Cys38–Cys57. Residues 42–44 carry the Cell attachment site; atypical (MLD) motif; sequence MLD.

The protein belongs to the disintegrin family. Dimeric disintegrin subfamily. As to quaternary structure, heterodimer; disulfide-linked. In terms of tissue distribution, expressed by the venom gland.

It is found in the secreted. Functionally, poor inhibitor of platelet aggregation. The disintegrin inhibits the adhesion of both the alpha-4/beta-1 (ITGA4/ITGB1) and the alpha-5/beta-1 (ITGA5/ITGB1) integrins to VCAM-1 and fibronectin respectively with almost the same degree of specificity. Inhibition on alpha-IIb/beta-3 (ITGA2B/ITGB3) is low. This Echis multisquamatus (Central Asian sand viper) protein is Disintegrin EMS11A.